Consider the following 296-residue polypeptide: ADP-dependent (S)-NAD(P)H-hydrate dehydratase (296 aa).

The region spanning 18 to 292 (TALRFPHVFK…PAARWLRNRI (275 aa)) is the YjeF C-terminal domain. Positions 53, 113, and 165 each coordinate (6S)-NADPHX. Residues 202–206 (KGHKT) and G231 each bind AMP. (6S)-NADPHX is bound at residue D232.

This sequence belongs to the NnrD/CARKD family. In terms of assembly, homotetramer. The cofactor is Mg(2+).

The enzyme catalyses (6S)-NADHX + ADP = AMP + phosphate + NADH + H(+). It catalyses the reaction (6S)-NADPHX + ADP = AMP + phosphate + NADPH + H(+). Its function is as follows. Catalyzes the dehydration of the S-form of NAD(P)HX at the expense of ADP, which is converted to AMP. Together with NAD(P)HX epimerase, which catalyzes the epimerization of the S- and R-forms, the enzyme allows the repair of both epimers of NAD(P)HX, a damaged form of NAD(P)H that is a result of enzymatic or heat-dependent hydration. The polypeptide is ADP-dependent (S)-NAD(P)H-hydrate dehydratase (Neisseria meningitidis serogroup B (strain ATCC BAA-335 / MC58)).